We begin with the raw amino-acid sequence, 176 residues long: Large ribosomal subunit protein eL20 (176 aa).

This sequence belongs to the eukaryotic ribosomal protein eL20 family. As to quaternary structure, component of the large ribosomal subunit.

Its subcellular location is the cytoplasm. In terms of biological role, component of the large ribosomal subunit. The ribosome is a large ribonucleoprotein complex responsible for the synthesis of proteins in the cell. The polypeptide is Large ribosomal subunit protein eL20 (rpl18a) (Salmo salar (Atlantic salmon)).